The chain runs to 833 residues: Major vault protein (833 aa).

MVP repeat units lie at residues Arg-10 to Pro-52, Arg-54 to Gln-115, Pro-119 to Tyr-170, Pro-171 to Ser-223, Glu-224 to Asn-278, Lys-280 to Gly-328, Lys-329 to Asp-380, and Arg-381 to Thr-433.

The vault ribonucleoprotein particle is a huge (400 A x 670 A) cage structure of 12.9 MDa. It consists of a dimer of half-vaults, with each half-vault comprising 39 identical major vault protein (MVP) chains, PARP4 and one or more vault RNAs (vRNAs).

The protein resides in the cytoplasm. It localises to the nucleus. In terms of biological role, required for normal vault structure. Vaults are multi-subunit structures that may act as scaffolds for proteins involved in signal transduction. Vaults may also play a role in nucleo-cytoplasmic transport. In Leishmania braziliensis, this protein is Major vault protein.